We begin with the raw amino-acid sequence, 274 residues long: 2,3,4,5-tetrahydropyridine-2,6-dicarboxylate N-succinyltransferase (274 aa).

Substrate-binding residues include arginine 104 and aspartate 141.

Belongs to the transferase hexapeptide repeat family. As to quaternary structure, homotrimer.

Its subcellular location is the cytoplasm. It catalyses the reaction (S)-2,3,4,5-tetrahydrodipicolinate + succinyl-CoA + H2O = (S)-2-succinylamino-6-oxoheptanedioate + CoA. It functions in the pathway amino-acid biosynthesis; L-lysine biosynthesis via DAP pathway; LL-2,6-diaminopimelate from (S)-tetrahydrodipicolinate (succinylase route): step 1/3. This is 2,3,4,5-tetrahydropyridine-2,6-dicarboxylate N-succinyltransferase from Edwardsiella ictaluri (strain 93-146).